The sequence spans 133 residues: ATP synthase epsilon chain (133 aa).

It belongs to the ATPase epsilon chain family. As to quaternary structure, F-type ATPases have 2 components, CF(1) - the catalytic core - and CF(0) - the membrane proton channel. CF(1) has five subunits: alpha(3), beta(3), gamma(1), delta(1), epsilon(1). CF(0) has three main subunits: a, b and c.

Its subcellular location is the cellular thylakoid membrane. Functionally, produces ATP from ADP in the presence of a proton gradient across the membrane. The polypeptide is ATP synthase epsilon chain (Prochlorococcus marinus (strain MIT 9303)).